The primary structure comprises 172 residues: Adenine phosphoribosyltransferase (172 aa).

The protein belongs to the purine/pyrimidine phosphoribosyltransferase family. In terms of assembly, homodimer.

Its subcellular location is the cytoplasm. It catalyses the reaction AMP + diphosphate = 5-phospho-alpha-D-ribose 1-diphosphate + adenine. Its pathway is purine metabolism; AMP biosynthesis via salvage pathway; AMP from adenine: step 1/1. In terms of biological role, catalyzes a salvage reaction resulting in the formation of AMP, that is energically less costly than de novo synthesis. In Picosynechococcus sp. (strain ATCC 27264 / PCC 7002 / PR-6) (Agmenellum quadruplicatum), this protein is Adenine phosphoribosyltransferase.